A 293-amino-acid polypeptide reads, in one-letter code: Formamidopyrimidine-DNA glycosylase (293 aa).

The active-site Schiff-base intermediate with DNA is the P2. The Proton donor role is filled by E3. K58 acts as the Proton donor; for beta-elimination activity in catalysis. Positions 104, 123, and 166 each coordinate DNA. The segment at 257-293 adopts an FPG-type zinc-finger fold; the sequence is AVYDREGERCRTPGCNGTVKRLVQNGRSTFWCSGCQT. The active-site Proton donor; for delta-elimination activity is R283.

It belongs to the FPG family. Monomer. Zn(2+) is required as a cofactor.

The catalysed reaction is Hydrolysis of DNA containing ring-opened 7-methylguanine residues, releasing 2,6-diamino-4-hydroxy-5-(N-methyl)formamidopyrimidine.. The enzyme catalyses 2'-deoxyribonucleotide-(2'-deoxyribose 5'-phosphate)-2'-deoxyribonucleotide-DNA = a 3'-end 2'-deoxyribonucleotide-(2,3-dehydro-2,3-deoxyribose 5'-phosphate)-DNA + a 5'-end 5'-phospho-2'-deoxyribonucleoside-DNA + H(+). Involved in base excision repair of DNA damaged by oxidation or by mutagenic agents. Acts as a DNA glycosylase that recognizes and removes damaged bases. Has a preference for oxidized purines, such as 7,8-dihydro-8-oxoguanine (8-oxoG). Has AP (apurinic/apyrimidinic) lyase activity and introduces nicks in the DNA strand. Cleaves the DNA backbone by beta-delta elimination to generate a single-strand break at the site of the removed base with both 3'- and 5'-phosphates. The chain is Formamidopyrimidine-DNA glycosylase from Rhodopseudomonas palustris (strain HaA2).